The following is a 69-amino-acid chain: DNA-directed RNA polymerase subunit epsilon (69 aa).

This sequence belongs to the RNA polymerase subunit epsilon family. RNAP is composed of a core of 2 alpha, a beta and a beta' subunit. The core is associated with a delta subunit, and at least one of epsilon or omega. When a sigma factor is associated with the core the holoenzyme is formed, which can initiate transcription.

It catalyses the reaction RNA(n) + a ribonucleoside 5'-triphosphate = RNA(n+1) + diphosphate. A non-essential component of RNA polymerase (RNAP). In Listeria monocytogenes serotype 4b (strain CLIP80459), this protein is DNA-directed RNA polymerase subunit epsilon.